Consider the following 551-residue polypeptide: Arginine--tRNA ligase (551 aa).

Positions 123–133 (ANPTGPLTIGR) match the 'HIGH' region motif.

It belongs to the class-I aminoacyl-tRNA synthetase family. Monomer.

The protein localises to the cytoplasm. It catalyses the reaction tRNA(Arg) + L-arginine + ATP = L-arginyl-tRNA(Arg) + AMP + diphosphate. The sequence is that of Arginine--tRNA ligase from Chlorobium limicola (strain DSM 245 / NBRC 103803 / 6330).